The primary structure comprises 436 residues: MTNNTMLISLSTQPADARWGEKATLSVNEQGFTIHVGTTSLNGKAALATIQRAARKIDGQGIKHVKLAGEGWDLANSWAFWQGYRGPKGQRTVEWADLSDADKKELNDRLKIVDWVRDTINLPAEDLGPEQLATRAVDLLCDVACDAISYRITKGEDLREQNYAGLHTVGRGSERQPVLLALDYNPTGNADAPVFACLVGKGITFDTGGYSLKPSSSMDSMKSDMGGAATLTGALALAASRGLQQRVKLYLCCADNMVSGNAFRLGDIIRYRNGKTVEVMNTDAEGRLVLADGLIDASEQNPQWIIDCATLTGAAKMALGNDYHALFSFDDELVAALQESAKEENEPFWRLPLEEFHRSHLPSSFADLNNIASGANTAGASTAAAFLSHFVKNYQQGWLHIDCSATYRKSAVEQWATGATGLGVRTLANLLLSNAK.

The Mn(2+) site is built by K201 and D206. K213 is an active-site residue. Residues D224, D283, and E285 each contribute to the Mn(2+) site. R287 is a catalytic residue.

Belongs to the peptidase M17 family. In terms of assembly, homohexamer. Mn(2+) serves as cofactor.

Its subcellular location is the cytoplasm. It catalyses the reaction Release of an N-terminal amino acid, Xaa, from a peptide or arylamide. Xaa is preferably Glu or Asp but may be other amino acids, including Leu, Met, His, Cys and Gln.. Its function is as follows. Probably plays an important role in intracellular peptide degradation. This chain is Peptidase B, found in Pectobacterium carotovorum subsp. carotovorum (strain PC1).